We begin with the raw amino-acid sequence, 338 residues long: Holliday junction branch migration complex subunit RuvB (338 aa).

A large ATPase domain (RuvB-L) region spans residues 1–181 (MERAITPEKR…FGVISRLEFY (181 aa)). ATP contacts are provided by residues Leu20, Arg21, Gly62, Lys65, Thr66, Thr67, 128 to 130 (EDF), Arg171, Tyr181, and Arg218. Residue Thr66 coordinates Mg(2+). Residues 182–252 (THDELAFIVT…VVQETLRLLE (71 aa)) are small ATPAse domain (RuvB-S). Residues 255 to 338 (EMGFDQMDRM…TPERPQGSLF (84 aa)) form a head domain (RuvB-H) region. DNA is bound by residues Arg310 and Arg315.

This sequence belongs to the RuvB family. As to quaternary structure, homohexamer. Forms an RuvA(8)-RuvB(12)-Holliday junction (HJ) complex. HJ DNA is sandwiched between 2 RuvA tetramers; dsDNA enters through RuvA and exits via RuvB. An RuvB hexamer assembles on each DNA strand where it exits the tetramer. Each RuvB hexamer is contacted by two RuvA subunits (via domain III) on 2 adjacent RuvB subunits; this complex drives branch migration. In the full resolvosome a probable DNA-RuvA(4)-RuvB(12)-RuvC(2) complex forms which resolves the HJ.

The protein resides in the cytoplasm. It catalyses the reaction ATP + H2O = ADP + phosphate + H(+). In terms of biological role, the RuvA-RuvB-RuvC complex processes Holliday junction (HJ) DNA during genetic recombination and DNA repair, while the RuvA-RuvB complex plays an important role in the rescue of blocked DNA replication forks via replication fork reversal (RFR). RuvA specifically binds to HJ cruciform DNA, conferring on it an open structure. The RuvB hexamer acts as an ATP-dependent pump, pulling dsDNA into and through the RuvAB complex. RuvB forms 2 homohexamers on either side of HJ DNA bound by 1 or 2 RuvA tetramers; 4 subunits per hexamer contact DNA at a time. Coordinated motions by a converter formed by DNA-disengaged RuvB subunits stimulates ATP hydrolysis and nucleotide exchange. Immobilization of the converter enables RuvB to convert the ATP-contained energy into a lever motion, pulling 2 nucleotides of DNA out of the RuvA tetramer per ATP hydrolyzed, thus driving DNA branch migration. The RuvB motors rotate together with the DNA substrate, which together with the progressing nucleotide cycle form the mechanistic basis for DNA recombination by continuous HJ branch migration. Branch migration allows RuvC to scan DNA until it finds its consensus sequence, where it cleaves and resolves cruciform DNA. The polypeptide is Holliday junction branch migration complex subunit RuvB (Trichlorobacter lovleyi (strain ATCC BAA-1151 / DSM 17278 / SZ) (Geobacter lovleyi)).